The sequence spans 351 residues: Serine protease inhibitor dipetalogastin (351 aa).

Positions 1–131 (LIKELVNMVI…AETTNAMEVL (131 aa)) are excised as a propeptide. 6 Kazal-like domains span residues 19–69 (KELK…PCDE), 72–122 (HDFE…ECHA), 131–181 (LFQG…PCDE), 184–234 (HDFE…ECHP), 240–289 (QLIL…ECKV), and 297–347 (GEVR…RCLP). Disulfide bonds link Cys-25-Cys-50, Cys-27-Cys-46, Cys-35-Cys-67, Cys-78-Cys-103, Cys-80-Cys-99, Cys-88-Cys-120, Cys-137-Cys-162, Cys-139-Cys-158, Cys-147-Cys-179, Cys-190-Cys-215, Cys-192-Cys-211, Cys-200-Cys-232, Cys-246-Cys-271, Cys-248-Cys-267, Cys-256-Cys-287, Cys-303-Cys-328, Cys-305-Cys-324, and Cys-313-Cys-345.

The protein localises to the secreted. Thrombin inhibitor. Prevents blood clotting to allow insect to feed on blood. Also functions as an inhibitor of trypsin and plasmin. The chain is Serine protease inhibitor dipetalogastin from Dipetalogaster maximus (Blood-sucking bug).